The chain runs to 491 residues: Galactose-1-phosphate uridylyltransferase (491 aa).

The protein belongs to the galactose-1-phosphate uridylyltransferase type 2 family.

The protein resides in the cytoplasm. The enzyme catalyses alpha-D-galactose 1-phosphate + UDP-alpha-D-glucose = alpha-D-glucose 1-phosphate + UDP-alpha-D-galactose. The protein operates within carbohydrate metabolism; galactose metabolism. In Streptococcus mutans serotype c (strain ATCC 700610 / UA159), this protein is Galactose-1-phosphate uridylyltransferase (galT).